Consider the following 106-residue polypeptide: Small ribosomal subunit protein uS10 (106 aa).

It belongs to the universal ribosomal protein uS10 family. Part of the 30S ribosomal subunit.

Functionally, involved in the binding of tRNA to the ribosomes. This Synechococcus sp. (strain WH7803) protein is Small ribosomal subunit protein uS10.